We begin with the raw amino-acid sequence, 257 residues long: Pyridoxine 5'-phosphate synthase (257 aa).

Asn-12 is a 3-amino-2-oxopropyl phosphate binding site. 14–15 (DH) serves as a coordination point for 1-deoxy-D-xylulose 5-phosphate. Arg-23 contacts 3-amino-2-oxopropyl phosphate. His-48 functions as the Proton acceptor in the catalytic mechanism. Residues Arg-50 and His-55 each coordinate 1-deoxy-D-xylulose 5-phosphate. The Proton acceptor role is filled by Glu-75. Residue Thr-105 participates in 1-deoxy-D-xylulose 5-phosphate binding. Catalysis depends on His-199, which acts as the Proton donor. 3-amino-2-oxopropyl phosphate contacts are provided by residues Gly-200 and 221 to 222 (GH).

This sequence belongs to the PNP synthase family. Homooctamer; tetramer of dimers.

The protein localises to the cytoplasm. The enzyme catalyses 3-amino-2-oxopropyl phosphate + 1-deoxy-D-xylulose 5-phosphate = pyridoxine 5'-phosphate + phosphate + 2 H2O + H(+). It functions in the pathway cofactor biosynthesis; pyridoxine 5'-phosphate biosynthesis; pyridoxine 5'-phosphate from D-erythrose 4-phosphate: step 5/5. Catalyzes the complicated ring closure reaction between the two acyclic compounds 1-deoxy-D-xylulose-5-phosphate (DXP) and 3-amino-2-oxopropyl phosphate (1-amino-acetone-3-phosphate or AAP) to form pyridoxine 5'-phosphate (PNP) and inorganic phosphate. The chain is Pyridoxine 5'-phosphate synthase from Xanthobacter autotrophicus (strain ATCC BAA-1158 / Py2).